The chain runs to 54 residues: Secreted virulence factor MC69 (54 aa).

Positions 1–16 are cleaved as a signal peptide; sequence MKAAFVLALCASLASA. Cysteine 36 and cysteine 46 are disulfide-bonded.

This sequence belongs to the MC69 virulence factor family.

The protein localises to the secreted. Functionally, secreted protein required for appressorial penetration of intact host epidermal cells and for pathogenicity. This chain is Secreted virulence factor MC69, found in Pyricularia oryzae (strain 70-15 / ATCC MYA-4617 / FGSC 8958) (Rice blast fungus).